Consider the following 238-residue polypeptide: Purine nucleoside phosphorylase DeoD-type (238 aa).

His-4 contacts a purine D-ribonucleoside. Phosphate-binding positions include Gly-20, Arg-24, Arg-43, and 87 to 90; that span reads RVGS. A purine D-ribonucleoside is bound by residues 179–181 and 203–204; these read EME and SD. The active-site Proton donor is the Asp-204.

The protein belongs to the PNP/UDP phosphorylase family. As to quaternary structure, homohexamer; trimer of homodimers.

It carries out the reaction a purine D-ribonucleoside + phosphate = a purine nucleobase + alpha-D-ribose 1-phosphate. The catalysed reaction is a purine 2'-deoxy-D-ribonucleoside + phosphate = a purine nucleobase + 2-deoxy-alpha-D-ribose 1-phosphate. In terms of biological role, catalyzes the reversible phosphorolytic breakdown of the N-glycosidic bond in the beta-(deoxy)ribonucleoside molecules, with the formation of the corresponding free purine bases and pentose-1-phosphate. This is Purine nucleoside phosphorylase DeoD-type from Mannheimia succiniciproducens (strain KCTC 0769BP / MBEL55E).